Consider the following 75-residue polypeptide: Large ribosomal subunit protein eL14 (75 aa).

This sequence belongs to the eukaryotic ribosomal protein eL14 family.

The protein is Large ribosomal subunit protein eL14 of Methanothermobacter thermautotrophicus (strain ATCC 29096 / DSM 1053 / JCM 10044 / NBRC 100330 / Delta H) (Methanobacterium thermoautotrophicum).